Reading from the N-terminus, the 405-residue chain is Growth/differentiation factor 11 (405 aa).

An N-terminal signal peptide occupies residues 1-20 (MVLAAPLLLGFLLLALELRP). The propeptide occupies 21 to 296 (RGEAAEGPAA…VLENTKRSRR (276 aa)). N92 carries N-linked (GlcNAc...) asparagine glycosylation. 4 disulfide bridges follow: C302–C312, C311–C370, C339–C402, and C343–C404.

Belongs to the TGF-beta family. In terms of assembly, homodimer; disulfide-linked. Interacts directly with ACVR2B. Interacts directly with ACVR2A. Interacts with ACVR1B, TGFBR1 and ACVR1C in an ACVR2B-dependent manner. Interacts with FST isoform 2/FS288. Post-translationally, synthesized as large precursor molecule that undergoes proteolytic cleavage by furin-like proteases. This produces an inactive form consisting of the mature C-terminal portion non-covalently bound to its cleaved N-terminal propeptide. Activation of the mature form requires additional cleavage of the propeptide by a tolloid-like metalloproteinase. In terms of tissue distribution, highly expressed in the developing limb bud, initially detected in the distal mesenchyme, and later localizing to regions around the developing bones. Is also expressed in adult dental pulp and brain.

Its subcellular location is the secreted. Secreted signal that acts globally to regulate anterior/posterior axial patterning during development. May play critical roles in patterning both mesodermal and neural tissues. It is required for proper vertebral patterning and orofacial development. Signals through activin receptors type-2, ACVR2A and ACVR2B, and activin receptors type-1, ACVR1B, ACVR1C and TGFBR1 leading to the phosphorylation of SMAD2 and SMAD3. The protein is Growth/differentiation factor 11 (Gdf11) of Mus musculus (Mouse).